The sequence spans 667 residues: Probable sulfate permease C320.05 (667 aa).

Residues 1–27 (MSSPSENHLLGPKTSFIDNRTSTSRPL) are disordered. Polar residues predominate over residues 16–25 (FIDNRTSTSR). 12 helical membrane passes run 77 to 97 (IIWD…IALS), 102 to 122 (FLGV…ILYC), 162 to 182 (ILVT…AGLF), 198 to 218 (GCIL…FFGF), 240 to 260 (MSKA…LLIG), 275 to 295 (IVSI…SKKF), 301 to 321 (YGIA…LPLP), 336 to 356 (GVMC…AISL), 368 to 388 (LISL…PICG), 405 to 425 (VATI…MPVF), 433 to 453 (LASM…VEIF), and 465 to 485 (GIIF…GIIF). Positions 532–657 (SSTAVESAPR…DHVQDSIKKV (126 aa)) constitute an STAS domain.

Belongs to the SLC26A/SulP transporter (TC 2.A.53) family.

The protein resides in the endoplasmic reticulum membrane. Possible sulfate transporter. The polypeptide is Probable sulfate permease C320.05 (Schizosaccharomyces pombe (strain 972 / ATCC 24843) (Fission yeast)).